The chain runs to 299 residues: Ankyrin repeat domain-containing protein 54 (299 aa).

A disordered region spans residues 1–27 (MAATGGGADDESRSGRSSSDGECAVAP). The residue at position 2 (Ala-2) is an N-acetylalanine. Position 62 is a phosphoserine (Ser-62). Residues 98–116 (RRLGPTGKEVHALKRLRDS) carry the Nuclear localization signal (NLS) motif. ANK repeat units lie at residues 108–137 (HALKRLRDSANANDVETVQQLLEDGADPCA), 141–170 (KGRTALHFASCNGNDQIVQLLLDHGADPNQ), 174–203 (LGNTPLHLAACTNHVPVITTLLRGGARVDA), and 207–239 (AGRTPLHLAKSKLNILQEGHSQCLEAVRLEVKQ). Positions 140–240 (DKGRTALHFA…EAVRLEVKQI (101 aa)) are LYN-binding. The Nuclear export signal (NES) signature appears at 282 to 292 (LLASFTSLSLQ).

As to quaternary structure, interacts (via ankyrin repeat region) with LYN (via SH3-domain) in an activation-independent status of LYN. Forms a multiprotein complex with LYN and HCLS1. Interacts with TSN2, VAV1, DBNL and LASP1. As to expression, expressed in a variety of hemopoietic cell lines and tissue with high levels in testis. Highly expressed in ciliated cells.

It localises to the nucleus. The protein resides in the cytoplasm. Its subcellular location is the midbody. In terms of biological role, plays an important role in regulating intracellular signaling events associated with erythroid terminal differentiation. This Mus musculus (Mouse) protein is Ankyrin repeat domain-containing protein 54 (Ankrd54).